We begin with the raw amino-acid sequence, 219 residues long: Translation initiation factor 6 (219 aa).

This sequence belongs to the eIF-6 family.

Binds to the 50S ribosomal subunit and prevents its association with the 30S ribosomal subunit to form the 70S initiation complex. The polypeptide is Translation initiation factor 6 (Methanosarcina mazei (strain ATCC BAA-159 / DSM 3647 / Goe1 / Go1 / JCM 11833 / OCM 88) (Methanosarcina frisia)).